Here is a 485-residue protein sequence, read N- to C-terminus: N-succinylglutamate 5-semialdehyde dehydrogenase (485 aa).

220–225 (GSANTG) serves as a coordination point for NAD(+). Active-site residues include glutamate 243 and cysteine 278.

The protein belongs to the aldehyde dehydrogenase family. AstD subfamily.

The enzyme catalyses N-succinyl-L-glutamate 5-semialdehyde + NAD(+) + H2O = N-succinyl-L-glutamate + NADH + 2 H(+). Its pathway is amino-acid degradation; L-arginine degradation via AST pathway; L-glutamate and succinate from L-arginine: step 4/5. Catalyzes the NAD-dependent reduction of succinylglutamate semialdehyde into succinylglutamate. The polypeptide is N-succinylglutamate 5-semialdehyde dehydrogenase (Vibrio atlanticus (strain LGP32) (Vibrio splendidus (strain Mel32))).